The chain runs to 32 residues: Fibrinolytic enzyme (32 aa).

Post-translationally, the N-terminus is blocked.

Inhibited by phenylmethanesulfonyl fluoride (PMSF). Not inhibited by EDTA, EGTA, beta-mercaptoethanol, indoacetamide, benzamidine, aprotinin, pepstatin A and trypsin inhibitor. Functionally, plasmin-like serine protease. Has fibrinolytic and fibrinogenolytic but not plasminogenolytic activity. Cleaves after Arg and Lys residues. The polypeptide is Fibrinolytic enzyme (Hediste japonica (Polychaete worm)).